Here is a 173-residue protein sequence, read N- to C-terminus: Bifunctional protein PyrR (173 aa).

The PRPP-binding signature appears at valine 93–threonine 105.

This sequence belongs to the purine/pyrimidine phosphoribosyltransferase family. PyrR subfamily. In terms of assembly, homodimer and homohexamer; in equilibrium.

It carries out the reaction UMP + diphosphate = 5-phospho-alpha-D-ribose 1-diphosphate + uracil. In terms of biological role, regulates transcriptional attenuation of the pyrimidine nucleotide (pyr) operon by binding in a uridine-dependent manner to specific sites on pyr mRNA. This disrupts an antiterminator hairpin in the RNA and favors formation of a downstream transcription terminator, leading to a reduced expression of downstream genes. Its function is as follows. Also displays a weak uracil phosphoribosyltransferase activity which is not physiologically significant. This is Bifunctional protein PyrR from Streptococcus thermophilus (strain CNRZ 1066).